Consider the following 340-residue polypeptide: Phosphate acyltransferase (340 aa).

The protein belongs to the PlsX family. As to quaternary structure, homodimer. Probably interacts with PlsY.

The protein localises to the cytoplasm. It catalyses the reaction a fatty acyl-[ACP] + phosphate = an acyl phosphate + holo-[ACP]. It functions in the pathway lipid metabolism; phospholipid metabolism. Catalyzes the reversible formation of acyl-phosphate (acyl-PO(4)) from acyl-[acyl-carrier-protein] (acyl-ACP). This enzyme utilizes acyl-ACP as fatty acyl donor, but not acyl-CoA. The protein is Phosphate acyltransferase of Pseudomonas savastanoi pv. phaseolicola (strain 1448A / Race 6) (Pseudomonas syringae pv. phaseolicola (strain 1448A / Race 6)).